The chain runs to 184 residues: Photosystem I assembly protein Ycf4 (184 aa).

Transmembrane regions (helical) follow at residues 19 to 39 and 57 to 77; these read ISNF…LLVG and IVFF…LFIS.

This sequence belongs to the Ycf4 family.

The protein localises to the plastid. The protein resides in the chloroplast thylakoid membrane. Functionally, seems to be required for the assembly of the photosystem I complex. The sequence is that of Photosystem I assembly protein Ycf4 from Atropa belladonna (Belladonna).